A 525-amino-acid polypeptide reads, in one-letter code: BTB/POZ domain-containing protein At1g50280 (525 aa).

The region spanning 5 to 79 (NDLKINLNGQ…CYHNGEILID (75 aa)) is the BTB domain. In terms of domain architecture, NPH3 spans 200–466 (EWWFEDMTNL…IEALKSRCGN (267 aa)).

Belongs to the NPH3 family.

It functions in the pathway protein modification; protein ubiquitination. May act as a substrate-specific adapter of an E3 ubiquitin-protein ligase complex (CUL3-RBX1-BTB) which mediates the ubiquitination and subsequent proteasomal degradation of target proteins. The protein is BTB/POZ domain-containing protein At1g50280 of Arabidopsis thaliana (Mouse-ear cress).